We begin with the raw amino-acid sequence, 232 residues long: Large ribosomal subunit protein uL1 (232 aa).

It belongs to the universal ribosomal protein uL1 family. As to quaternary structure, part of the 50S ribosomal subunit.

Its function is as follows. Binds directly to 23S rRNA. The L1 stalk is quite mobile in the ribosome, and is involved in E site tRNA release. In terms of biological role, protein L1 is also a translational repressor protein, it controls the translation of the L11 operon by binding to its mRNA. The chain is Large ribosomal subunit protein uL1 from Burkholderia cenocepacia (strain HI2424).